The chain runs to 218 residues: Very-long-chain (3R)-3-hydroxyacyl-CoA dehydratase (218 aa).

At 1–6 (MKTYLS) the chain is on the cytoplasmic side. A helical transmembrane segment spans residues 7–29 (IYYLIQFCGHSWIFTNMTTRFLF). Residues 30–38 (FGQDAFADT) lie on the Lumenal side of the membrane. The helical transmembrane segment at 39–61 (FYSIGLVMQGCQLLSILELAHIL) threads the bilayer. At 62–67 (LGVEQN) the chain is on the cytoplasmic side. Residues 68 to 87 (GFLPMFLQVAERFIILFVVI) form a helical membrane-spanning segment. Residues 88–96 (TSQEEVQSK) are Lumenal-facing. A helical transmembrane segment spans residues 97-116 (YIVCALFFIWNLWDVIRYPY). The Cytoplasmic portion of the chain corresponds to 117–136 (DMLAAVDTDYSALTWLRHTW). The chain crosses the membrane as a helical span at residues 137–159 (WIVAYPLSVLAEAYTIYESLPYF). Residues Tyr141 and Glu148 contribute to the active site. Topologically, residues 160–178 (ESLGTYSFKMALPVSLSFH) are lumenal. The helical transmembrane segment at 179 to 201 (FPYILTLYLVLQPVGMLYICSCL) threads the bilayer. The Cytoplasmic segment spans residues 202–218 (WSERKQYFQRKLKLKKN).

This sequence belongs to the very long-chain fatty acids dehydratase HACD family.

The protein localises to the endoplasmic reticulum membrane. The catalysed reaction is a very-long-chain (3R)-3-hydroxyacyl-CoA = a very-long-chain (2E)-enoyl-CoA + H2O. The enzyme catalyses (3R)-hydroxyhexadecanoyl-CoA = (2E)-hexadecenoyl-CoA + H2O. Its pathway is lipid metabolism; fatty acid biosynthesis. Catalyzes the third of the four reactions of the long-chain fatty acids elongation cycle. This endoplasmic reticulum-bound enzymatic process, allows the addition of two carbons to the chain of long- and very long-chain fatty acids/VLCFAs per cycle. This enzyme catalyzes the dehydration of the 3-hydroxyacyl-CoA intermediate into trans-2,3-enoyl-CoA, within each cycle of fatty acid elongation. Thereby, it participates in the production of VLCFAs of different chain lengths that are involved in multiple biological processes as precursors of membrane lipids and lipid mediators. This Xenopus laevis (African clawed frog) protein is Very-long-chain (3R)-3-hydroxyacyl-CoA dehydratase.